The chain runs to 200 residues: Ribonuclease HII (200 aa).

One can recognise an RNase H type-2 domain in the interval 1–200 (MRYGGVDEAG…EINKKLTDFI (200 aa)). Asp-7, Glu-8, and Asp-99 together coordinate a divalent metal cation.

This sequence belongs to the RNase HII family. Mn(2+) is required as a cofactor. Requires Mg(2+) as cofactor.

Its subcellular location is the cytoplasm. It carries out the reaction Endonucleolytic cleavage to 5'-phosphomonoester.. Endonuclease that specifically degrades the RNA of RNA-DNA hybrids. This Nanoarchaeum equitans (strain Kin4-M) protein is Ribonuclease HII.